The following is a 354-amino-acid chain: Uroporphyrinogen decarboxylase (354 aa).

Residues 27–31 (RQAGR), aspartate 77, tyrosine 154, threonine 209, and histidine 327 contribute to the substrate site.

This sequence belongs to the uroporphyrinogen decarboxylase family. Homodimer.

Its subcellular location is the cytoplasm. It catalyses the reaction uroporphyrinogen III + 4 H(+) = coproporphyrinogen III + 4 CO2. It functions in the pathway porphyrin-containing compound metabolism; protoporphyrin-IX biosynthesis; coproporphyrinogen-III from 5-aminolevulinate: step 4/4. In terms of biological role, catalyzes the decarboxylation of four acetate groups of uroporphyrinogen-III to yield coproporphyrinogen-III. This is Uroporphyrinogen decarboxylase from Pseudomonas putida (strain GB-1).